Here is a 692-residue protein sequence, read N- to C-terminus: Potassium-transporting ATPase ATP-binding subunit (692 aa).

4 helical membrane passes run 35-55 (VMFI…KDLY), 64-84 (LQIS…EAIA), 213-233 (IALT…VMSL), and 254-274 (ILIS…LSAI). The active-site 4-aspartylphosphate intermediate is Asp-307. ATP contacts are provided by residues Asp-344, Glu-348, 377–384 (FSASTKMS), and Lys-400. Residues Asp-523 and Asp-527 each coordinate Mg(2+). Helical transmembrane passes span 592–612 (YFAI…VGPL), 626–646 (AVLS…PLAL), and 672–692 (MVIP…LGII).

Belongs to the cation transport ATPase (P-type) (TC 3.A.3) family. Type IA subfamily. As to quaternary structure, the system is composed of three essential subunits: KdpA, KdpB and KdpC.

It localises to the cell inner membrane. The catalysed reaction is K(+)(out) + ATP + H2O = K(+)(in) + ADP + phosphate + H(+). Its function is as follows. Part of the high-affinity ATP-driven potassium transport (or Kdp) system, which catalyzes the hydrolysis of ATP coupled with the electrogenic transport of potassium into the cytoplasm. This subunit is responsible for energy coupling to the transport system and for the release of the potassium ions to the cytoplasm. This is Potassium-transporting ATPase ATP-binding subunit from Leptospira interrogans serogroup Icterohaemorrhagiae serovar Lai (strain 56601).